A 308-amino-acid chain; its full sequence is Glutamyl-Q tRNA(Asp) synthetase (308 aa).

L-glutamate is bound by residues 19–23 (RFAPS) and glutamate 55. The short motif at 22-32 (PSPSGELHFGS) is the 'HIGH' region element. Zn(2+) is bound by residues cysteine 111, cysteine 113, tyrosine 125, and cysteine 129. Positions 182 and 200 each coordinate L-glutamate. The 'KMSKS' region motif lies at 238-242 (KLSKQ). Residue lysine 241 participates in ATP binding.

Belongs to the class-I aminoacyl-tRNA synthetase family. GluQ subfamily. Requires Zn(2+) as cofactor.

Catalyzes the tRNA-independent activation of glutamate in presence of ATP and the subsequent transfer of glutamate onto a tRNA(Asp). Glutamate is transferred on the 2-amino-5-(4,5-dihydroxy-2-cyclopenten-1-yl) moiety of the queuosine in the wobble position of the QUC anticodon. This chain is Glutamyl-Q tRNA(Asp) synthetase, found in Escherichia coli (strain K12 / MC4100 / BW2952).